An 862-amino-acid chain; its full sequence is MAQLSFNAALKMNALGNKAIHDPTNCRAKSEGQMMWVCSKSGRTRVKMSRGSGGPGPVVMMSSSTGTSKVVSETSSTIVDDIPRLSANYHGDLWHHNVIQTLETPFRESSTYQERADELVVKIKDMFNALGDGDISPSAYDTAWVARVATISSDGSEKPRFPQALNWVFNNQLQDGSWGIESHFSLCDRLLNTTNSVIALSVWKTGHSQVEQGTEFIAENLRLLNEEDELSPDFEIIFPALLQKAKALGINLPYDLPFIKYLSTTREARLTDVSAAADNIPANMLNALEGLEEVMDWKKIMRFQSKDGSFLSSPASTACVLMNTGDEKCFTFLNNLLVKFGGCVPCMYSIDLLERLSLVDNIEHLGIGRHFKQEIKVALDYVYRHWSERGIGWGRDSLVPDLNTTALGLRTLRTHGYDVSSDVLNNFKDENGRFFSSAGQTHVELRSVVILFRASDLAFPDEGAMDDARKFAEPYLRDALATKISTNTKLFKEIEYVVEYPWHMSIPRSEARSYIDSYDDDYVWERKTLYRMPSLSNSKCLELAKLDFNIVQSLHQEELKLLTRWWKESGMADINFTRHRVAEVYFSSATFEPEYSATRIAFTKIGCLQVLFDDMADIFATLDELKSFTEGVKRWDTSLLHEIPECMQTCFKVWFKLIEEVNNDVVKVQGRDMLAHIRKPWELYFNCYVQEREWLDAGYIPTFEEYLKTYAISVGLGPCTLQPILLMGELVKDDVVEKVHYPSNMFELVSLSWRLTNDTKTYQAEKARGQQASGIACYMKDNLGATEEDAIKHICRVVDRALKEASFEYFKPSNDIPMGCKSFIFNLRLCVQIFYKFIDGYGIANEEIKDYIRKVYIDPIQV.

A disordered region spans residues 45 to 66 (RVKMSRGSGGPGPVVMMSSSTG). The Mg(2+) site is built by D613, D617, N757, T761, and E765. Positions 613-617 (DDMAD) match the DDXXD motif motif.

This sequence belongs to the terpene synthase family. Mg(2+) serves as cofactor.

It catalyses the reaction (2E,6E,10E)-geranylgeranyl diphosphate = taxa-4(5),11(12)-diene + diphosphate. Its pathway is alkaloid biosynthesis; taxol biosynthesis; taxa-4(20),11-dien-5alpha-ol from geranylgeranyl diphosphate: step 1/2. Functionally, catalyzes the cyclization of the ubiquitous isoprenoid intermediate geranylgeranyl diphosphate to taxa-4,11-diene, the parent olefin with a taxane skeleton. The chain is Taxadiene synthase (TDC1) from Taxus chinensis (Chinese yew).